The primary structure comprises 194 residues: Adenylate kinase isoenzyme 1 (194 aa).

An N-acetylmethionine modification is found at Met-1. Gly-18–Thr-23 lines the ATP pocket. Residue Ser-38 is modified to Phosphoserine. The tract at residues Ser-38–Val-67 is NMP. Residues Thr-39, Arg-44, Gln-65–Val-67, Gly-94–Arg-97, and Gln-101 contribute to the AMP site. The segment at Lys-131–Asp-141 is LID. Arg-132 serves as a coordination point for ATP. Residues Arg-138 and Arg-149 each contribute to the AMP site. An ATP-binding site is contributed by Gly-177.

It belongs to the adenylate kinase family. AK1 subfamily. As to quaternary structure, monomer. Requires Mg(2+) as cofactor.

It is found in the cytoplasm. It carries out the reaction a ribonucleoside 5'-phosphate + ATP = a ribonucleoside 5'-diphosphate + ADP. The enzyme catalyses AMP + ATP = 2 ADP. The catalysed reaction is dAMP + ATP = dADP + ADP. It catalyses the reaction dATP + AMP = dADP + ADP. It carries out the reaction dAMP + dATP = 2 dADP. The enzyme catalyses a 2'-deoxyribonucleoside 5'-diphosphate + ATP = a 2'-deoxyribonucleoside 5'-triphosphate + ADP. The catalysed reaction is a ribonucleoside 5'-diphosphate + ATP = a ribonucleoside 5'-triphosphate + ADP. It catalyses the reaction CDP + GTP = CTP + GDP. It carries out the reaction GDP + ATP = GTP + ADP. The enzyme catalyses UDP + ATP = UTP + ADP. The catalysed reaction is GTP + UDP = UTP + GDP. It catalyses the reaction dTDP + GTP = dTTP + GDP. It carries out the reaction dCDP + GTP = dCTP + GDP. The enzyme catalyses dGDP + ATP = dGTP + ADP. The catalysed reaction is dADP + GTP = dATP + GDP. It catalyses the reaction thiamine diphosphate + ADP = thiamine triphosphate + AMP. In terms of biological role, catalyzes the reversible transfer of the terminal phosphate group between ATP and AMP. Also displays broad nucleoside diphosphate kinase activity. Plays an important role in cellular energy homeostasis and in adenine nucleotide metabolism. Also catalyzes at a very low rate the synthesis of thiamine triphosphate (ThTP) from thiamine diphosphate (ThDP) and ADP. The protein is Adenylate kinase isoenzyme 1 of Bos taurus (Bovine).